The following is a 300-amino-acid chain: UDP-N-acetylenolpyruvoylglucosamine reductase (300 aa).

The region spanning 30 to 194 (KVGGPADFFA…LAAVFSLAAG (165 aa)) is the FAD-binding PCMH-type domain. R174 is a catalytic residue. S223 serves as the catalytic Proton donor. The active site involves E293.

The protein belongs to the MurB family. The cofactor is FAD.

It localises to the cytoplasm. It carries out the reaction UDP-N-acetyl-alpha-D-muramate + NADP(+) = UDP-N-acetyl-3-O-(1-carboxyvinyl)-alpha-D-glucosamine + NADPH + H(+). It participates in cell wall biogenesis; peptidoglycan biosynthesis. Functionally, cell wall formation. The polypeptide is UDP-N-acetylenolpyruvoylglucosamine reductase (Geotalea uraniireducens (strain Rf4) (Geobacter uraniireducens)).